Reading from the N-terminus, the 268-residue chain is uncharacterized protein (268 aa).

3 consecutive transmembrane segments (helical) span residues 169–189 (AIIYVFMCLFFSLFWFYQGFA), 190–210 (GVKTSILTGTAEIGLAILWLL), and 225–245 (IFAGFACLGSEIFMWVLLSVF).

It is found in the cell membrane. This is an uncharacterized protein from Bacillus subtilis (strain 168).